A 463-amino-acid chain; its full sequence is Fumarate hydratase class II (463 aa).

Substrate contacts are provided by residues 98-100 (SGT), 129-132 (HPND), 139-141 (SSN), and Thr187. Catalysis depends on His188, which acts as the Proton donor/acceptor. Residue Ser318 is part of the active site. Substrate is bound by residues Ser319 and 324–326 (KVN).

The protein belongs to the class-II fumarase/aspartase family. Fumarase subfamily. In terms of assembly, homotetramer.

Its subcellular location is the cytoplasm. The catalysed reaction is (S)-malate = fumarate + H2O. The protein operates within carbohydrate metabolism; tricarboxylic acid cycle; (S)-malate from fumarate: step 1/1. Involved in the TCA cycle. Catalyzes the stereospecific interconversion of fumarate to L-malate. In Caulobacter vibrioides (strain ATCC 19089 / CIP 103742 / CB 15) (Caulobacter crescentus), this protein is Fumarate hydratase class II.